The primary structure comprises 102 residues: Large ribosomal subunit protein bL21 (102 aa).

This sequence belongs to the bacterial ribosomal protein bL21 family. As to quaternary structure, part of the 50S ribosomal subunit. Contacts protein L20.

Its function is as follows. This protein binds to 23S rRNA in the presence of protein L20. The chain is Large ribosomal subunit protein bL21 from Agathobacter rectalis (strain ATCC 33656 / DSM 3377 / JCM 17463 / KCTC 5835 / VPI 0990) (Eubacterium rectale).